The following is a 235-amino-acid chain: 2-C-methyl-D-erythritol 4-phosphate cytidylyltransferase (235 aa).

It belongs to the IspD/TarI cytidylyltransferase family. IspD subfamily.

It catalyses the reaction 2-C-methyl-D-erythritol 4-phosphate + CTP + H(+) = 4-CDP-2-C-methyl-D-erythritol + diphosphate. Its pathway is isoprenoid biosynthesis; isopentenyl diphosphate biosynthesis via DXP pathway; isopentenyl diphosphate from 1-deoxy-D-xylulose 5-phosphate: step 2/6. In terms of biological role, catalyzes the formation of 4-diphosphocytidyl-2-C-methyl-D-erythritol from CTP and 2-C-methyl-D-erythritol 4-phosphate (MEP). The polypeptide is 2-C-methyl-D-erythritol 4-phosphate cytidylyltransferase (Synechococcus sp. (strain JA-3-3Ab) (Cyanobacteria bacterium Yellowstone A-Prime)).